Consider the following 259-residue polypeptide: Type III pantothenate kinase (259 aa).

6–13 (DVGNTNIV) serves as a coordination point for ATP. Substrate is bound by residues Y100 and 107–110 (GADR). D109 functions as the Proton acceptor in the catalytic mechanism. Position 129 (D129) interacts with K(+). T132 serves as a coordination point for ATP. A substrate-binding site is contributed by T184.

The protein belongs to the type III pantothenate kinase family. Homodimer. The cofactor is NH4(+). It depends on K(+) as a cofactor.

The protein resides in the cytoplasm. The catalysed reaction is (R)-pantothenate + ATP = (R)-4'-phosphopantothenate + ADP + H(+). It participates in cofactor biosynthesis; coenzyme A biosynthesis; CoA from (R)-pantothenate: step 1/5. Functionally, catalyzes the phosphorylation of pantothenate (Pan), the first step in CoA biosynthesis. This chain is Type III pantothenate kinase, found in Clostridium perfringens (strain ATCC 13124 / DSM 756 / JCM 1290 / NCIMB 6125 / NCTC 8237 / Type A).